Here is a 471-residue protein sequence, read N- to C-terminus: 5-hydroxytryptamine receptor 2A (471 aa).

Topologically, residues 1-80 (MDILCEENTS…LQEKNWSALL (80 aa)) are extracellular. An N-linked (GlcNAc...) asparagine glycan is attached at N38. The chain crosses the membrane as a helical span at residues 81–97 (TAVVIILTIAGNILVIM). At 98–111 (AVSLEKKLQNATNY) the chain is on the cytoplasmic side. The helical transmembrane segment at 112 to 137 (FLMSLAIADMLLGFLVMPVSMLTILY) threads the bilayer. Residues 138-146 (GYRWPLPSK) are Extracellular-facing. A helical transmembrane segment spans residues 147–171 (LCAVWIYLDVLFSTASIMHLCAISL). C148 and C227 are disulfide-bonded. D155 is a serotonin binding site. A DRY motif; important for ligand-induced conformation changes motif is present at residues 172–174 (DRY). The Cytoplasmic portion of the chain corresponds to 172–191 (DRYVAIQNPIHHSRFNSRTK). A helical membrane pass occupies residues 192–215 (AFLKIIAVWTISVGISMPIPVFGL). Over 216–232 (QDDSKVFKEGSCLLADD) the chain is Extracellular. The helical transmembrane segment at 233–258 (NFVLIGSFVSFFIPLTIMVITYFLTI) threads the bilayer. Topologically, residues 259–322 (KSLQKEATLC…QSISNEQKAC (64 aa)) are cytoplasmic. The residue at position 280 (S280) is a Phosphoserine. The helical transmembrane segment at 323–348 (KVLGIVFSLFVVMWCPFFITNIMAVI) threads the bilayer. N343 is a binding site for serotonin. An intrachain disulfide couples C349 to C353. The Extracellular portion of the chain corresponds to 349–356 (CKESCNED). Residues 357–382 (VIGALLNVFVWIGYLSSAVNPLVYTL) traverse the membrane as a helical segment. The NPxxY motif; important for ligand-induced conformation changes and signaling signature appears at 376-380 (NPLVY). At 383 to 471 (FNKTYRSAFS…DGVNEKVSCV (89 aa)) the chain is on the cytoplasmic side. The disordered stretch occupies residues 450-471 (KQHSEDASKDNSDGVNEKVSCV). The span at 451 to 465 (QHSEDASKDNSDGVN) shows a compositional bias: basic and acidic residues. The short motif at 469-471 (SCV) is the PDZ-binding element.

The protein belongs to the G-protein coupled receptor 1 family. As to quaternary structure, interacts (via C-terminus) with MPDZ and PATJ. May interact (via C-terminus) with MPP3, PRDX6, DLG4, DLG1, CASK, APBA1 and MAGI2. Interacts with GRM2 and DRD2; this may affect signaling.

It is found in the cell membrane. The protein resides in the cell projection. The protein localises to the dendrite. Its subcellular location is the axon. It localises to the cytoplasmic vesicle. It is found in the membrane. The protein resides in the caveola. The protein localises to the presynapse. Its activity is regulated as follows. G-protein coupled receptor activity is regulated by lipids: oleamide increases HTR2A-mediated activity. In terms of biological role, G-protein coupled receptor for 5-hydroxytryptamine (serotonin). Also functions as a receptor for various drugs and psychoactive substances, including mescaline, psilocybin, 1-(2,5-dimethoxy-4-iodophenyl)-2-aminopropane (DOI) and lysergic acid diethylamide (LSD). Ligand binding causes a conformation change that triggers signaling via guanine nucleotide-binding proteins (G proteins) and modulates the activity of downstream effectors. HTR2A is coupled to G(q)/G(11) G alpha proteins and activates phospholipase C-beta, releasing diacylglycerol (DAG) and inositol 1,4,5-trisphosphate (IP3) second messengers that modulate the activity of phosphatidylinositol 3-kinase and promote the release of Ca(2+) ions from intracellular stores, respectively. Beta-arrestin family members inhibit signaling via G proteins and mediate activation of alternative signaling pathways. Affects neural activity, perception, cognition and mood. Plays a role in the regulation of behavior, including responses to anxiogenic situations and psychoactive substances. Plays a role in intestinal smooth muscle contraction, and may play a role in arterial vasoconstriction. The sequence is that of 5-hydroxytryptamine receptor 2A (HTR2A) from Pongo pygmaeus (Bornean orangutan).